Here is a 157-residue protein sequence, read N- to C-terminus: Recombination endonuclease VII (157 aa).

Cysteine 23 and cysteine 26 together coordinate Zn(2+). Aspartate 40 contributes to the Ca(2+) binding site. The Zn(2+) site is built by cysteine 58 and cysteine 61. A Ca(2+)-binding site is contributed by asparagine 62.

As to quaternary structure, homodimer. It depends on Ca(2+) as a cofactor. Zn(2+) is required as a cofactor.

Functionally, cleaves DNA cruciform and Y-structures as well as heteroduplex loops. Resolves Holliday junctions, recognizes a broad spectrum of DNA substrates ranging from branched DNAs to single base mismatches. The protein is Recombination endonuclease VII (49) of Enterobacteria phage T4 (Bacteriophage T4).